We begin with the raw amino-acid sequence, 249 residues long: Sulfate transporter CysZ (249 aa).

The next 4 membrane-spanning stretches (helical) occupy residues L26–A46, V71–L91, L150–F170, and L206–M226.

It belongs to the CysZ family.

The protein localises to the cell inner membrane. High affinity, high specificity proton-dependent sulfate transporter, which mediates sulfate uptake. Provides the sulfur source for the cysteine synthesis pathway. The sequence is that of Sulfate transporter CysZ from Pseudomonas fluorescens (strain ATCC BAA-477 / NRRL B-23932 / Pf-5).